An 880-amino-acid chain; its full sequence is Leucine--tRNA ligase (880 aa).

Positions 46–56 match the 'HIGH' region motif; it reads PYPSGALHMGH. Positions 638 to 642 match the 'KMSKS' region motif; sequence KMSKS. K641 provides a ligand contact to ATP.

It belongs to the class-I aminoacyl-tRNA synthetase family.

It localises to the cytoplasm. It carries out the reaction tRNA(Leu) + L-leucine + ATP = L-leucyl-tRNA(Leu) + AMP + diphosphate. This chain is Leucine--tRNA ligase, found in Xanthomonas oryzae pv. oryzae (strain KACC10331 / KXO85).